The primary structure comprises 157 residues: Endoribonuclease YbeY (157 aa).

3 residues coordinate Zn(2+): His-114, His-118, and His-124.

It belongs to the endoribonuclease YbeY family. It depends on Zn(2+) as a cofactor.

Its subcellular location is the cytoplasm. Its function is as follows. Single strand-specific metallo-endoribonuclease involved in late-stage 70S ribosome quality control and in maturation of the 3' terminus of the 16S rRNA. This is Endoribonuclease YbeY from Yersinia pestis.